Reading from the N-terminus, the 188-residue chain is dCTP deaminase (188 aa).

DCTP contacts are provided by residues 111–116, 135–137, glutamine 156, tyrosine 170, lysine 179, and glutamine 180; these read KSTYAR and TLE. Catalysis depends on glutamate 137, which acts as the Proton donor/acceptor.

Belongs to the dCTP deaminase family. In terms of assembly, homotrimer.

It catalyses the reaction dCTP + H2O + H(+) = dUTP + NH4(+). It functions in the pathway pyrimidine metabolism; dUMP biosynthesis; dUMP from dCTP (dUTP route): step 1/2. In terms of biological role, catalyzes the deamination of dCTP to dUTP. The polypeptide is dCTP deaminase (Orientia tsutsugamushi (strain Ikeda) (Rickettsia tsutsugamushi)).